The primary structure comprises 124 residues: uncharacterized protein (124 aa).

It localises to the cytoplasm. The protein resides in the nucleus. This is an uncharacterized protein from Schizosaccharomyces pombe (strain 972 / ATCC 24843) (Fission yeast).